Consider the following 304-residue polypeptide: MSKVAIDLAGVKKSFGDKLVVNGLSFTVASGECFGLLGPNGAGKSTIARMLLGMTVPDAGKITVLGEPVGARSRLARKSIGVVPQFDNLDQEFTVRENLLVFGRYFGMSTRKIKEVIPSLLEFARLESKADARVGELSGGMKRRLTLARALINDPQLLVMDEPTTGLDPHARHLIWERLRFLLARGKTIILTTHFMEEAERLCDRLCVLEHGRKLAEGSPHALIEEHIGCQVIEIFGGNPQELVSLIRPYVQRVEVSGETLFCYTADPEQVRVQLRGRAGLRLLERPPSLEDVFLRLTGREMEK.

The 231-residue stretch at 6–236 folds into the ABC transporter domain; it reads IDLAGVKKSF…HIGCQVIEIF (231 aa). 38 to 45 provides a ligand contact to ATP; that stretch reads GPNGAGKS.

It belongs to the ABC transporter superfamily. Lipooligosaccharide exporter (TC 3.A.1.102) family. As to quaternary structure, the complex is composed of two ATP-binding proteins (NodI) and two transmembrane proteins (NodJ).

It is found in the cell inner membrane. Its function is as follows. Part of the ABC transporter complex NodIJ involved in the export of the nodulation factors (Nod factors), the bacterial signal molecules that induce symbiosis and subsequent nodulation induction. Nod factors are LCO (lipo-chitin oligosaccharide), a modified beta-1,4-linked N-acetylglucosamine oligosaccharide. This subunit is responsible for energy coupling to the transport system. This Rhizobium sp. (strain N33) protein is Nod factor export ATP-binding protein I.